We begin with the raw amino-acid sequence, 513 residues long: Matrix metalloproteinase-27 (513 aa).

Residues 1–17 (MKRLLLLFLFFITFSSA) form the signal peptide. Residues 18–98 (FPLVRMTENE…PRCGVPDVGQ (81 aa)) constitute a propeptide, activation peptide. N-linked (GlcNAc...) asparagine glycosylation is present at Asn55. The Cysteine switch signature appears at 89 to 96 (PRCGVPDV). Position 91 (Cys91) interacts with Zn(2+). Residue Asn110 is glycosylated (N-linked (GlcNAc...) asparagine). Ca(2+) contacts are provided by Asp121 and Asp155. His165 is a Zn(2+) binding site. 3 residues coordinate Ca(2+): Asp173, Gly174, and Val178. A Zn(2+)-binding site is contributed by His181. Residues Gly188 and Asp192 each coordinate Ca(2+). His194 contributes to the Zn(2+) binding site. Ca(2+)-binding residues include Asp196 and Glu199. Position 216 (His216) interacts with Zn(2+). Residue Glu217 is part of the active site. Zn(2+)-binding residues include His220 and His226. 4 Hemopexin repeats span residues 276–325 (PHAC…WPSL), 326–371 (PADL…GFPG), 373–421 (VKKI…FPGI), and 422–465 (SIRV…WFQC). Cys279 and Cys465 are oxidised to a cystine. A Ca(2+)-binding site is contributed by Asp286. Asp377 and Asp426 together coordinate Ca(2+). An N-linked (GlcNAc...) asparagine glycan is attached at Asn452. The required for retention in the endoplasmic reticulum stretch occupies residues 466–513 (KEPKNSSFGFDINKEKAHSGGIKILYHKSLSLFIFGIVHLLKNTSIYQ).

This sequence belongs to the peptidase M10A family. Ca(2+) is required as a cofactor. Zn(2+) serves as cofactor. Post-translationally, N-glycosylated. As to expression, expressed in B-cells. Expressed in a subset of endometrial macrophages related to menstruation and in ovarian and peritoneal endometriotic lesions (at protein level).

It is found in the endoplasmic reticulum. Its function is as follows. Matrix metalloproteinases degrade protein components of the extracellular matrix such as fibronectin, laminin, gelatins and/or collagens. The sequence is that of Matrix metalloproteinase-27 (MMP27) from Homo sapiens (Human).